Consider the following 258-residue polypeptide: Indole-3-glycerol phosphate synthase (258 aa).

Belongs to the TrpC family.

It carries out the reaction 1-(2-carboxyphenylamino)-1-deoxy-D-ribulose 5-phosphate + H(+) = (1S,2R)-1-C-(indol-3-yl)glycerol 3-phosphate + CO2 + H2O. The protein operates within amino-acid biosynthesis; L-tryptophan biosynthesis; L-tryptophan from chorismate: step 4/5. The polypeptide is Indole-3-glycerol phosphate synthase (Chlorobium phaeobacteroides (strain DSM 266 / SMG 266 / 2430)).